The following is a 104-amino-acid chain: Large ribosomal subunit protein eL42 (104 aa).

Belongs to the eukaryotic ribosomal protein eL42 family. Component of the large ribosomal subunit. Mature ribosomes consist of a small (40S) and a large (60S) subunit. The 40S subunit contains about 32 different proteins and 1 molecule of RNA (18S). The 60S subunit contains about 42 different proteins and 3 molecules of RNA (28S, 5.8S and 5S).

It is found in the cytoplasm. In terms of biological role, component of the ribosome, a large ribonucleoprotein complex responsible for the synthesis of proteins in the cell. The small ribosomal subunit (SSU) binds messenger RNAs (mRNAs) and translates the encoded message by selecting cognate aminoacyl-transfer RNA (tRNA) molecules. The large subunit (LSU) contains the ribosomal catalytic site termed the peptidyl transferase center (PTC), which catalyzes the formation of peptide bonds, thereby polymerizing the amino acids delivered by tRNAs into a polypeptide chain. The nascent polypeptides leave the ribosome through a tunnel in the LSU and interact with protein factors that function in enzymatic processing, targeting, and the membrane insertion of nascent chains at the exit of the ribosomal tunnel. This Plasmodium falciparum (isolate 3D7) protein is Large ribosomal subunit protein eL42.